Reading from the N-terminus, the 382-residue chain is ATP phosphoribosyltransferase regulatory subunit (382 aa).

The protein belongs to the class-II aminoacyl-tRNA synthetase family. HisZ subfamily. Heteromultimer composed of HisG and HisZ subunits.

Its subcellular location is the cytoplasm. Its pathway is amino-acid biosynthesis; L-histidine biosynthesis; L-histidine from 5-phospho-alpha-D-ribose 1-diphosphate: step 1/9. Required for the first step of histidine biosynthesis. May allow the feedback regulation of ATP phosphoribosyltransferase activity by histidine. The protein is ATP phosphoribosyltransferase regulatory subunit of Burkholderia ambifaria (strain ATCC BAA-244 / DSM 16087 / CCUG 44356 / LMG 19182 / AMMD) (Burkholderia cepacia (strain AMMD)).